A 536-amino-acid chain; its full sequence is Nucleosome assembly protein 1-like 3 (536 aa).

Disordered regions lie at residues 1–104 (MAEA…DKLP) and 160–338 (PTEE…KEDP). Over residues 35–75 (SNSSSSTTSCGSTGSSSSSSSSSSSSSSSSSGSSGSSSNGS) the composition is skewed to low complexity. Basic residues predominate over residues 77 to 95 (LHQKKRVPGPSRRAQRRPS). Acidic residues predominate over residues 160–184 (PTEEECEWNSEEEFSGDEEMQDDTP). 2 stretches are compositionally biased toward basic and acidic residues: residues 199–220 (GKENTEVKEEVKDVPEEVPEAK) and 227–269 (PKET…KTDS). The span at 287 to 300 (TQANAEYTDQPTED) shows a compositional bias: polar residues. Positions 306 to 324 (PVREAQKRVPETRPEERVN) are enriched in basic and acidic residues.

This sequence belongs to the nucleosome assembly protein (NAP) family.

It localises to the nucleus. This is Nucleosome assembly protein 1-like 3 (Nap1l3) from Rattus norvegicus (Rat).